The following is a 93-amino-acid chain: Small ribosomal subunit protein bS18 (93 aa).

Belongs to the bacterial ribosomal protein bS18 family. Part of the 30S ribosomal subunit. Forms a tight heterodimer with protein bS6.

Binds as a heterodimer with protein bS6 to the central domain of the 16S rRNA, where it helps stabilize the platform of the 30S subunit. This chain is Small ribosomal subunit protein bS18, found in Delftia acidovorans (strain DSM 14801 / SPH-1).